Here is a 398-residue protein sequence, read N- to C-terminus: E3 ubiquitin-protein ligase ATL6 (398 aa).

A signal peptide spans Met1–Ser29. A helical membrane pass occupies residues Ala50 to Phe70. The RING-type; atypical zinc finger occupies Cys128–Arg170. Ser278 bears the Phosphoserine mark. The disordered stretch occupies residues Pro368–Val398. The segment covering Gly378 to Val398 has biased composition (low complexity).

This sequence belongs to the RING-type zinc finger family. ATL subfamily.

It is found in the membrane. The catalysed reaction is S-ubiquitinyl-[E2 ubiquitin-conjugating enzyme]-L-cysteine + [acceptor protein]-L-lysine = [E2 ubiquitin-conjugating enzyme]-L-cysteine + N(6)-ubiquitinyl-[acceptor protein]-L-lysine.. The protein operates within protein modification; protein ubiquitination. Functionally, E3 ubiquitin-protein ligase able to catalyze polyubiquitination with ubiquitin-conjugating enzyme E2 UBC8 in vitro. May be involved in the plant C/N response and the early steps of the plant defense signaling pathway. In Arabidopsis thaliana (Mouse-ear cress), this protein is E3 ubiquitin-protein ligase ATL6 (ATL6).